A 536-amino-acid polypeptide reads, in one-letter code: Cytoplasmic dynein 2 intermediate chain 2 (536 aa).

Ser15 is subject to Phosphoserine. The segment at Arg80–Val93 is DYNLL2 binding. The interval Pro106–Ala131 is DYNLRB1 binding. 5 WD repeats span residues Glu215–Leu255, Thr264–Leu308, Pro390–Ser430, Leu433–Thr473, and Gln480–Gly520.

The protein belongs to the dynein light intermediate chain family. In terms of assembly, the cytoplasmic dynein 2 complex consists of two catalytic heavy chains (HCs) and a number of non-catalytic subunits presented by intermediate chains (ICs), light intermediate chains (LICs) and light chains (LCs). Among them, a heavy chain (DYNC2H1), two intermediate chains (DYNC2I2 and DYNC2I1), a light intermediate chain (DYNC2LI1), and a light chain (DYNLT2B) are unique to the cytoplasmic dynein complex 2, but a subset of the light chains are also shared by dynein-1 and dynein-2 complexes. Interacts with DYNC2I1; their C-terminal domains each bind a copy of the heavy chain, and their extended N-terminal regions are held together by an array of light chain dimers. Interacts with DYNLL2; this interaction is essential for dynein-2-mediated retrograde trafficking of ciliary proteins. Interacts with DYNLRB1; this interaction is essential for dynein-2-mediated retrograde trafficking of ciliary proteins. Interacts (via the WD domains) with MAP3K7 and TAB3. Interacts (via WD domains) with TAB2 (via C-terminus). Interacts (via WD domains) with TRAF6 (via TRAF-type domains). In terms of tissue distribution, expressed in several cell lines (at protein level).

It localises to the cytoplasm. The protein localises to the cytoskeleton. Its subcellular location is the cilium basal body. The protein resides in the cilium axoneme. It is found in the microtubule organizing center. It localises to the centrosome. The protein localises to the cell projection. Its subcellular location is the cilium. The protein resides in the filopodium. Its function is as follows. Acts as one of several non-catalytic accessory components of the cytoplasmic dynein 2 complex (dynein-2 complex), a motor protein complex that drives the movement of cargos along microtubules within cilia and flagella in concert with the intraflagellar transport (IFT) system. DYNC2I2 plays a major role in retrograde ciliary protein trafficking and in ciliogenesis. Required also to maintain a functional transition zone. In terms of biological role, acts as a negative regulator of the Toll-like and IL-1R receptor signaling pathways. Inhibits the MAP3K7-induced NF-kappa-B activation pathway. Inhibits MAP3K7 phosphorylation at 'Thr-184' and 'Thr-187' upon Il-1 beta stimulation. The chain is Cytoplasmic dynein 2 intermediate chain 2 from Homo sapiens (Human).